The sequence spans 98 residues: NADH-ubiquinone oxidoreductase chain 4L (98 aa).

The next 3 membrane-spanning stretches (helical) occupy residues 2-22, 29-49, and 61-81; these read PSIF…TLVF, SLLC…LIIL, and ILLL…LVMV.

This sequence belongs to the complex I subunit 4L family. Core subunit of respiratory chain NADH dehydrogenase (Complex I) which is composed of 45 different subunits.

The protein localises to the mitochondrion inner membrane. The enzyme catalyses a ubiquinone + NADH + 5 H(+)(in) = a ubiquinol + NAD(+) + 4 H(+)(out). Core subunit of the mitochondrial membrane respiratory chain NADH dehydrogenase (Complex I) which catalyzes electron transfer from NADH through the respiratory chain, using ubiquinone as an electron acceptor. Part of the enzyme membrane arm which is embedded in the lipid bilayer and involved in proton translocation. This chain is NADH-ubiquinone oxidoreductase chain 4L (MT-ND4L), found in Propithecus diadema diadema (Diademed sifaka).